Consider the following 375-residue polypeptide: 4-hydroxy-3-methylbut-2-en-1-yl diphosphate synthase (flavodoxin) (375 aa).

C270, C273, C305, and E312 together coordinate [4Fe-4S] cluster.

This sequence belongs to the IspG family. Requires [4Fe-4S] cluster as cofactor.

The enzyme catalyses (2E)-4-hydroxy-3-methylbut-2-enyl diphosphate + oxidized [flavodoxin] + H2O + 2 H(+) = 2-C-methyl-D-erythritol 2,4-cyclic diphosphate + reduced [flavodoxin]. The protein operates within isoprenoid biosynthesis; isopentenyl diphosphate biosynthesis via DXP pathway; isopentenyl diphosphate from 1-deoxy-D-xylulose 5-phosphate: step 5/6. Its function is as follows. Converts 2C-methyl-D-erythritol 2,4-cyclodiphosphate (ME-2,4cPP) into 1-hydroxy-2-methyl-2-(E)-butenyl 4-diphosphate. In Yersinia pestis (strain Pestoides F), this protein is 4-hydroxy-3-methylbut-2-en-1-yl diphosphate synthase (flavodoxin).